Reading from the N-terminus, the 326-residue chain is MREVLLSECIDLLYESHFVISKPFGRSCFDLIAKKADLRFLIKILKNIDSLSTEQSEELLNIAKMLQAVPIIIGTRTRNSVMEEGAVYERYGIKAVTFNTFRDQLFGEPPVVYANRGGFFVNIDGAVLRETREKLKISVGELAEISRVSRKTIYKYEQNEANPSAEVAIKIEEYLDVPLIKGINIVDYMEGLKSQKSREEAFEKILKESEDFKIRVIDILGDMGFNLLETTKAPFDAVAEESKEDDSENQNIIFTNIQETENEEIRRKAMIVDEISKMLNSHSLLVLEKKTNENKRITSMSISELEKIGDTVDLLEFIEKKKKSTK.

An HTH cro/C1-type domain is found at 128 to 183; sequence LRETREKLKISVGELAEISRVSRKTIYKYEQNEANPSAEVAIKIEEYLDVPLIKGI. A DNA-binding region (H-T-H motif) is located at residues 139-158; that stretch reads VGELAEISRVSRKTIYKYEQ.

This is Putative HTH-type transcriptional regulatory protein MmarC5_0898 from Methanococcus maripaludis (strain C5 / ATCC BAA-1333).